A 196-amino-acid chain; its full sequence is Large ribosomal subunit protein bL25 (196 aa).

The protein belongs to the bacterial ribosomal protein bL25 family. CTC subfamily. In terms of assembly, part of the 50S ribosomal subunit; part of the 5S rRNA/L5/L18/L25 subcomplex. Contacts the 5S rRNA. Binds to the 5S rRNA independently of L5 and L18.

This is one of the proteins that binds to the 5S RNA in the ribosome where it forms part of the central protuberance. In Geotalea daltonii (strain DSM 22248 / JCM 15807 / FRC-32) (Geobacter daltonii), this protein is Large ribosomal subunit protein bL25.